Reading from the N-terminus, the 140-residue chain is PDZ domain-containing protein 11 (140 aa).

Residues 47-129 (IVTLKKPPGA…ISMRVRFFPY (83 aa)) form the PDZ domain.

As to quaternary structure, interacts with ATP2B1, ATP2B2, ATP2B3, ATP2B4 and ATP7A. Interacts with PLEKHA7 (via WW domains) at zonula adherens; this interaction is essential for the interaction between PLEKHA7 and the ADAM10-binding protein TSPAN33. Interacts with SLC5A6.

The protein resides in the cytoplasm. The protein localises to the cell junction. It is found in the adherens junction. Its subcellular location is the cell membrane. Functionally, mediates docking of ADAM10 to zonula adherens by interacting with PLEKHA7 which is required for PLEKHA7 to interact with the ADAM10-binding protein TSPAN33. In Mus musculus (Mouse), this protein is PDZ domain-containing protein 11 (Pdzd11).